The primary structure comprises 173 residues: Small ribosomal subunit protein uS5 (173 aa).

Residues 17–80 (WQERVIQIRR…ADGKKQLIEV (64 aa)) form the S5 DRBM domain.

This sequence belongs to the universal ribosomal protein uS5 family. Part of the 30S ribosomal subunit. Contacts proteins S4 and S8.

Its function is as follows. With S4 and S12 plays an important role in translational accuracy. In terms of biological role, located at the back of the 30S subunit body where it stabilizes the conformation of the head with respect to the body. The polypeptide is Small ribosomal subunit protein uS5 (Synechocystis sp. (strain ATCC 27184 / PCC 6803 / Kazusa)).